The primary structure comprises 334 residues: Thiamine-binding periplasmic protein (334 aa).

The first 23 residues, 1–23 (MRLLSLLTFSLFAVIGLAPAAQA), serve as a signal peptide directing secretion. Residues 64–65 (DG), 166–167 (AT), Trp202, and 220–223 (YTTS) each bind thiamine.

It belongs to the bacterial solute-binding protein 1 family. In terms of assembly, the complex is composed of two ATP-binding proteins (ThiQ), two transmembrane proteins (ThiP) and a solute-binding protein (ThiB).

It localises to the periplasm. Functionally, part of the ABC transporter complex ThiBPQ involved in thiamine import. This Brucella abortus biovar 1 (strain 9-941) protein is Thiamine-binding periplasmic protein (thiB).